The primary structure comprises 474 residues: Ubiquinol-cytochrome-c reductase complex core protein 2, mitochondrial (474 aa).

Residues 1–42 (MKSVVRSKGTQALFRRFSSALGDSINPNQVGVGDNVIRVNGR) constitute a mitochondrion transit peptide.

This sequence belongs to the peptidase M16 family. UQCRC2/QCR2 subfamily. In terms of assembly, component of the ubiquinol-cytochrome c oxidoreductase (cytochrome b-c1 complex, complex III, CIII), a multisubunit enzyme composed of 3 respiratory subunits cytochrome b, cytochrome c1 and Rieske protein, 2 core protein subunits, and additional low-molecular weight protein subunits. The complex exists as an obligatory dimer and forms supercomplexes (SCs) in the inner mitochondrial membrane with cytochrome c oxidase (complex IV, CIV).

The protein localises to the mitochondrion inner membrane. Component of the ubiquinol-cytochrome c oxidoreductase, a multisubunit transmembrane complex that is part of the mitochondrial electron transport chain which drives oxidative phosphorylation. The respiratory chain contains 3 multisubunit complexes succinate dehydrogenase (complex II, CII), ubiquinol-cytochrome c oxidoreductase (cytochrome b-c1 complex, complex III, CIII) and cytochrome c oxidase (complex IV, CIV), that cooperate to transfer electrons derived from NADH and succinate to molecular oxygen, creating an electrochemical gradient over the inner membrane that drives transmembrane transport and the ATP synthase. The cytochrome b-c1 complex catalyzes electron transfer from ubiquinol to cytochrome c, linking this redox reaction to translocation of protons across the mitochondrial inner membrane, with protons being carried across the membrane as hydrogens on the quinol. In the process called Q cycle, 2 protons are consumed from the matrix, 4 protons are released into the intermembrane space and 2 electrons are passed to cytochrome c. The polypeptide is Ubiquinol-cytochrome-c reductase complex core protein 2, mitochondrial (Euglena gracilis).